We begin with the raw amino-acid sequence, 2021 residues long: Fanconi anemia group M protein homolog (2021 aa).

Ser30 carries the phosphoserine modification. Residues 86-254 (ISRSALFCNT…QVITNLLIGK (169 aa)) enclose the Helicase ATP-binding domain. Position 99-106 (99-106 (LPTGLGKT)) interacts with ATP. The DEAH box motif lies at 202-205 (DEAH). Residues 437–612 (KLEEVILEHF…VLRLYQGSPR (176 aa)) form the Helicase C-terminal domain. Disordered stretches follow at residues 638–657 (RSVQ…SKSN), 837–886 (PCRA…RMAD), 1002–1049 (CSPY…LPGT), 1244–1273 (GAAD…AISP), 1296–1319 (ASSS…SSKT), 1369–1441 (PRRT…RTCP), 1447–1466 (KGRN…RSQV), 1615–1700 (NKKQ…QPSI), and 1712–1732 (AQSH…ESRK). Positions 1018–1035 (ASHSAGNSQQNLESNSAK) are enriched in polar residues. The span at 1249–1259 (SGRHSDKEIKD) shows a compositional bias: basic and acidic residues. Residues 1370–1379 (RRTEVEHLTS) show a composition bias toward basic and acidic residues. Residues 1388 to 1397 (RKTKKPKRNV) show a composition bias toward basic residues. A Phosphoserine modification is found at Ser1637. Positions 1669–1682 (SGPSGSSVPPQVLS) are enriched in low complexity. Residues 1684 to 1700 (PSWNQSSRQRLQVQPSI) are compositionally biased toward polar residues. Positions 1689–2009 (SSRQRLQVQP…LNQERQKPDT (321 aa)) are interaction with FAAP24.

This sequence belongs to the DEAD box helicase family. DEAH subfamily. FANCM sub-subfamily. In terms of assembly, component of the Fanconi anemia (FA) core complex, which consists of CENPS, CENPX, FANCA, FANCB, FANCC, FANCE, FANCF, FANCG, FANCL, FANCM, FAAP24 and FAAP100. The FA core complex associates with Bloom syndrome (BLM) complex, which consists of at least BLM, DNA topoisomerase 3-alpha/TOP3A, RMI1/BLAP75, RPA1/RPA70 and RPA2/RPA32. This supercomplex between FA and BLM complexes has been called BRAFT. Forms a discrete complex with CENPS and CENPX, called FANCM-MHF; this interaction stimulates DNA binding and replication fork remodeling by FANCM and stabilizes the binding partners. Forms a heterodimer with FAAP24; this interaction increases FANCM single-stranded DNA-binding activity. Post-translationally, phosphorylated; hyperphosphorylated in response to genotoxic stress.

The protein localises to the nucleus. The catalysed reaction is ATP + H2O = ADP + phosphate + H(+). DNA-dependent ATPase component of the Fanconi anemia (FA) core complex. Required for the normal activation of the FA pathway, leading to monoubiquitination of the FANCI-FANCD2 complex in response to DNA damage, cellular resistance to DNA cross-linking drugs, and prevention of chromosomal breakage. In complex with CENPS and CENPX, binds double-stranded DNA (dsDNA), fork-structured DNA (fsDNA) and Holliday junction substrates. Its ATP-dependent DNA branch migration activity can process branched DNA structures such as a movable replication fork. This activity is strongly stimulated in the presence of CENPS and CENPX. In complex with FAAP24, efficiently binds to single-strand DNA (ssDNA), splayed-arm DNA, and 3'-flap substrates. In vitro, on its own, strongly binds ssDNA oligomers and weakly fsDNA, but does not bind to dsDNA. The polypeptide is Fanconi anemia group M protein homolog (Fancm) (Mus musculus (Mouse)).